A 327-amino-acid chain; its full sequence is Probable cell division protein WhiA (327 aa).

The segment at residues Ser-275–Lys-308 is a DNA-binding region (H-T-H motif).

The protein belongs to the WhiA family.

Functionally, involved in cell division and chromosome segregation. This chain is Probable cell division protein WhiA, found in Mycobacterium marinum (strain ATCC BAA-535 / M).